The primary structure comprises 226 residues: E3 ubiquitin-protein ligase RNF186 (226 aa).

The segment at 39 to 85 (CLVCREPYSGVRPPKLLGCQHAFCAVCLKLLLCVQDDAWSIPCPLCR) adopts an RING-type zinc-finger fold. Residues 121–143 (GLANPATLTAGQPREAGEEEQDA) are disordered. The next 2 helical transmembrane spans lie at 157 to 177 (HLLLLVLLIILILPFIYPGVI) and 179 to 199 (WVLSFLETLALLLALLFCSHP).

In terms of assembly, interacts with BNIP1. In terms of processing, polyubiquitinated. 'Lys-29' autoubiquitination leads to proteasomal degradation.

The protein resides in the endoplasmic reticulum membrane. It catalyses the reaction S-ubiquitinyl-[E2 ubiquitin-conjugating enzyme]-L-cysteine + [acceptor protein]-L-lysine = [E2 ubiquitin-conjugating enzyme]-L-cysteine + N(6)-ubiquitinyl-[acceptor protein]-L-lysine.. Its pathway is protein modification; protein ubiquitination. Functionally, E3 ubiquitin protein ligase that is part of an apoptotic signaling pathway activated by endoplasmic reticulum stress. Stimulates the expression of proteins specific of the unfolded protein response (UPR), ubiquitinates BNIP1 and regulates its localization to the mitochondrion and induces calcium release from the endoplasmic reticulum that ultimately leads to cell apoptosis. Plays a role in the maintenance of intestinal homeostasis and clearance of enteric pathogens. Upon NOD2 stimulation, ubiquitinates the ER stress sensor activating transcription factor 6/ATF6 and promotes the unfolded protein response UPR. Participates in basal level of autophagy maintenance by regulating the ubiquitination of EPHB2. Upon stimulation by ligand EFNB1, ubiquitinates EPHB2 and further recruits MAP1LC3B for autophagy induction. Controls nutrient sensing by ubiquitinating Sestrin-2/SESN2, which is an intracellular sensor of cytosolic leucine and inhibitor of mTORC1 activity. This Bos taurus (Bovine) protein is E3 ubiquitin-protein ligase RNF186.